We begin with the raw amino-acid sequence, 193 residues long: ATP-dependent Clp protease proteolytic subunit (193 aa).

S98 functions as the Nucleophile in the catalytic mechanism. Residue H123 is part of the active site.

Belongs to the peptidase S14 family. Fourteen ClpP subunits assemble into 2 heptameric rings which stack back to back to give a disk-like structure with a central cavity, resembling the structure of eukaryotic proteasomes.

Its subcellular location is the cytoplasm. The catalysed reaction is Hydrolysis of proteins to small peptides in the presence of ATP and magnesium. alpha-casein is the usual test substrate. In the absence of ATP, only oligopeptides shorter than five residues are hydrolyzed (such as succinyl-Leu-Tyr-|-NHMec, and Leu-Tyr-Leu-|-Tyr-Trp, in which cleavage of the -Tyr-|-Leu- and -Tyr-|-Trp bonds also occurs).. Cleaves peptides in various proteins in a process that requires ATP hydrolysis. Has a chymotrypsin-like activity. Plays a major role in the degradation of misfolded proteins. The protein is ATP-dependent Clp protease proteolytic subunit of Lachnospira eligens (strain ATCC 27750 / DSM 3376 / VPI C15-48 / C15-B4) (Eubacterium eligens).